The chain runs to 357 residues: Mitochondrial carrier protein LEU5 (357 aa).

The next 6 membrane-spanning stretches (helical) occupy residues 31 to 47, 103 to 119, 136 to 153, 208 to 228, 269 to 285, and 325 to 347; these read DYIV…GSCA, LRIF…YEQI, LVSG…TYPL, VPTV…HDLL, ISGG…AYPF, and GFFV…SFFV. 3 Solcar repeats span residues 31–122, 130–231, and 262–354; these read DYIV…IRNT, ESHW…LHDV, and LRTW…MKWN.

The protein belongs to the mitochondrial carrier (TC 2.A.29) family.

Its subcellular location is the mitochondrion inner membrane. In terms of biological role, required for the accumulation of coenzyme A in the mitochondrial matrix. This is Mitochondrial carrier protein LEU5 (LEU5) from Saccharomyces cerevisiae (strain ATCC 204508 / S288c) (Baker's yeast).